Consider the following 332-residue polypeptide: UPF0194 membrane protein YbhG (332 aa).

An N-terminal signal peptide occupies residues 1 to 16 (MMKKPVVIGLAVVVLA). A coiled-coil region spans residues 108–209 (EEIAQAAAAV…LNLQDSTLIA (102 aa)).

Belongs to the UPF0194 family.

The protein localises to the periplasm. The polypeptide is UPF0194 membrane protein YbhG (Shigella boydii serotype 4 (strain Sb227)).